Reading from the N-terminus, the 211-residue chain is Ribosomal RNA small subunit methyltransferase G (211 aa).

Residues Gly-73, Phe-78, 124–125, and Arg-137 each bind S-adenosyl-L-methionine; that span reads VE.

It belongs to the methyltransferase superfamily. RNA methyltransferase RsmG family.

It localises to the cytoplasm. Functionally, specifically methylates the N7 position of a guanine in 16S rRNA. The protein is Ribosomal RNA small subunit methyltransferase G of Christiangramia forsetii (strain DSM 17595 / CGMCC 1.15422 / KT0803) (Gramella forsetii).